A 499-amino-acid polypeptide reads, in one-letter code: Cysteine--tRNA ligase (499 aa).

Cys-29 provides a ligand contact to Zn(2+). The 'HIGH' region signature appears at 31 to 41 (VTVYDLCHLGH). 3 residues coordinate Zn(2+): Cys-213, His-238, and Glu-242. Positions 270–274 (KMSKS) match the 'KMSKS' region motif. Lys-273 is an ATP binding site.

Belongs to the class-I aminoacyl-tRNA synthetase family. Monomer. Zn(2+) is required as a cofactor.

The protein localises to the cytoplasm. It carries out the reaction tRNA(Cys) + L-cysteine + ATP = L-cysteinyl-tRNA(Cys) + AMP + diphosphate. This is Cysteine--tRNA ligase from Prochlorococcus marinus (strain MIT 9303).